The chain runs to 139 residues: Non-structural protein 1 (139 aa).

The short motif at 136-139 (DLNP) is the DLNP; interaction with MAP1B element.

Belongs to the pneumovirus non-structural protein 1 family. Monomer. Homomultimer. Heteromultimer with NS2. Interacts with the matrix protein M. Interacts with host ELOC and CUL2; this interaction allows NS1 to form an active E3 ligase with ELOC and CUL2. Interacts with host IRF3; this interaction leads to the disrupted association of IRF3 with CREBBP and thus reduced binding of IRF3 to the IFN-beta promoter. Interacts with host MAVS; this interaction prevents MAVS binding to RIGI and inhibits signaling pathway leading to interferon production. Interacts with host MAP1B/microtubule-associated protein 1B. Interacts with host TRIM25 (via SPRY domain); this interaction suppresses RIGI ubiquitination and results in decreased interaction between RIGI and MAVS.

The protein localises to the host cytoplasm. It localises to the host mitochondrion. Its subcellular location is the host nucleus. In terms of biological role, plays a major role in antagonizing the type I IFN-mediated antiviral response by degrading or inhibiting multiple cellular factors required for either IFN induction or response pathways. Acts cooperatively with NS2 to repress activation and nuclear translocation of host IFN-regulatory factor IRF3. Also disrupts the association of IRF3 with CREBBP. Interacts with host mitochondrial-associated membrane (MAM) MAVS and prevents the interaction with RIGI. Interacts with TRIM25 to suppress TRIM25-mediated RIGI ubiquitination and thereby RIGI-MAVS interaction. Together with NS2, participates in the proteasomal degradation of host STAT2, IRF3, IRF7, TBK1 and RIGI through a NS-degradasome involving CUL2 and Elongin-C. The degradasome requires an intact mitochondrial MAVS. Decreases the levels of host TRAF3 and IKBKE/IKK-epsilon. As functions other than disruptions of the type I IFN-mediated antiviral signaling pathways, induces host SOCS1 and SOCS3 expression. Suppresses premature apoptosis by an NF-kappa-B-dependent, interferon-independent mechanism and thus facilitates virus growth. Additionally, NS1 may serve some inhibitory role in viral transcription and RNA replication. Suppresses proliferation and activation of host CD103+ CD8+ cytotoxic T-lymphocytes and Th17 helper T-lymphocytes. In Homo sapiens (Human), this protein is Non-structural protein 1 (1C).